The primary structure comprises 216 residues: Ribonuclease HII (216 aa).

The RNase H type-2 domain occupies 28–216; the sequence is DIVCGVDEAG…PVRAALDLIR (189 aa). D34, E35, and D126 together coordinate a divalent metal cation.

Belongs to the RNase HII family. The cofactor is Mn(2+). Mg(2+) serves as cofactor.

The protein localises to the cytoplasm. It carries out the reaction Endonucleolytic cleavage to 5'-phosphomonoester.. Endonuclease that specifically degrades the RNA of RNA-DNA hybrids. In Burkholderia vietnamiensis (strain G4 / LMG 22486) (Burkholderia cepacia (strain R1808)), this protein is Ribonuclease HII.